Here is a 354-residue protein sequence, read N- to C-terminus: Peptide chain release factor 1 (354 aa).

Gln-230 carries the N5-methylglutamine modification.

Belongs to the prokaryotic/mitochondrial release factor family. Post-translationally, methylated by PrmC. Methylation increases the termination efficiency of RF1.

It is found in the cytoplasm. Its function is as follows. Peptide chain release factor 1 directs the termination of translation in response to the peptide chain termination codons UAG and UAA. This chain is Peptide chain release factor 1, found in Rhodospirillum rubrum (strain ATCC 11170 / ATH 1.1.1 / DSM 467 / LMG 4362 / NCIMB 8255 / S1).